The following is a 406-amino-acid chain: MKNEVKKVVLAYSGGLDTSIILKWLQDEYNCEVVTFTADIGQGEELEPARKKALSLGIKEENIFIKDLRDEFVKDYVFPMFRANAIYEGEYLLGTSIARPLIAKTQAQIALQTGADAVSHGATGKGNDQVRFELGYLAFSPDLKIIAPWREWDLNSREKLLAYAQKHGIDISKKKGKSPYSMDANLLHISYEGLVLEDPAHAPEEDMWRWSKSPKDAPNESEIIELDFQKGDLVAINGEKLSPAGLLTKLNELGCKHGIGRLDIVENRYVGMKSRGCYETPGGTILLKAHRALESITLDREAAHLKDELMPKYASLIYNGYWFSPERMMLQALIDESQIHANGRVKLELYKGNVMVIGRESANDSLFNAAYCTFEEDEVYNQKDAAGFIKLNALRFIIAGKNGRKF.

ATP contacts are provided by residues 11-19 (AYSGGLDTS) and alanine 38. Tyrosine 91 and serine 96 together coordinate L-citrulline. Glycine 121 contacts ATP. Threonine 123, asparagine 127, and aspartate 128 together coordinate L-aspartate. Residue asparagine 127 coordinates L-citrulline. L-citrulline-binding residues include arginine 131, serine 181, serine 190, glutamate 266, and tyrosine 278.

The protein belongs to the argininosuccinate synthase family. Type 1 subfamily. In terms of assembly, homotetramer.

It is found in the cytoplasm. The enzyme catalyses L-citrulline + L-aspartate + ATP = 2-(N(omega)-L-arginino)succinate + AMP + diphosphate + H(+). It functions in the pathway amino-acid biosynthesis; L-arginine biosynthesis; L-arginine from L-ornithine and carbamoyl phosphate: step 2/3. The sequence is that of Argininosuccinate synthase from Campylobacter jejuni subsp. jejuni serotype O:2 (strain ATCC 700819 / NCTC 11168).